The sequence spans 89 residues: Small ribosomal subunit protein uS15 (89 aa).

This sequence belongs to the universal ribosomal protein uS15 family. Part of the 30S ribosomal subunit. Forms a bridge to the 50S subunit in the 70S ribosome, contacting the 23S rRNA.

In terms of biological role, one of the primary rRNA binding proteins, it binds directly to 16S rRNA where it helps nucleate assembly of the platform of the 30S subunit by binding and bridging several RNA helices of the 16S rRNA. Functionally, forms an intersubunit bridge (bridge B4) with the 23S rRNA of the 50S subunit in the ribosome. This Polynucleobacter necessarius subsp. necessarius (strain STIR1) protein is Small ribosomal subunit protein uS15.